A 157-amino-acid chain; its full sequence is Small ribosomal subunit protein uS7 (157 aa).

The protein belongs to the universal ribosomal protein uS7 family. As to quaternary structure, part of the 30S ribosomal subunit. Contacts proteins S9 and S11.

One of the primary rRNA binding proteins, it binds directly to 16S rRNA where it nucleates assembly of the head domain of the 30S subunit. Is located at the subunit interface close to the decoding center, probably blocks exit of the E-site tRNA. This is Small ribosomal subunit protein uS7 from Chlamydia felis (strain Fe/C-56) (Chlamydophila felis).